Here is a 153-residue protein sequence, read N- to C-terminus: Large ribosomal subunit protein bL9 (153 aa).

Belongs to the bacterial ribosomal protein bL9 family.

Functionally, binds to the 23S rRNA. This Micrococcus luteus (strain ATCC 4698 / DSM 20030 / JCM 1464 / CCM 169 / CCUG 5858 / IAM 1056 / NBRC 3333 / NCIMB 9278 / NCTC 2665 / VKM Ac-2230) (Micrococcus lysodeikticus) protein is Large ribosomal subunit protein bL9.